The chain runs to 716 residues: Astellifadiene synthase (716 aa).

Residues 1-323 are terpene cyclase; sequence MEFKYSTLID…SPRYYTDAKF (323 aa). Aspartate 92 provides a ligand contact to Mg(2+). Residues aspartate 92, 179–182, asparagine 223, 227–231, and 316–317 each bind substrate; these read RIYD, SWEKE, and RY. The short motif at 92-96 is the DDXXD 1 element; sequence DDVID. The NSE/DTE signature appears at 223-231; that stretch reads NDLVSWEKE. Positions 324-713 are prenyltransferase; sequence SQRQLDWIKN…FQLKLILQFL (390 aa). Isopentenyl diphosphate contacts are provided by lysine 436, arginine 439, and histidine 468. Positions 475 and 479 each coordinate Mg(2+). The DDXXD 2 motif lies at 475–479; the sequence is DDVED. Residue arginine 484 coordinates dimethylallyl diphosphate. Residue arginine 485 participates in isopentenyl diphosphate binding. Residues lysine 562, threonine 563, glutamine 598, asparagine 605, lysine 615, and lysine 625 each coordinate dimethylallyl diphosphate.

This sequence in the N-terminal section; belongs to the terpene synthase family. In the C-terminal section; belongs to the FPP/GGPP synthase family. In terms of assembly, hexamer. It depends on Mg(2+) as a cofactor.

It carries out the reaction isopentenyl diphosphate + (2E,6E)-farnesyl diphosphate = (2E,6E,10E)-geranylgeranyl diphosphate + diphosphate. The catalysed reaction is isopentenyl diphosphate + (2E,6E,10E)-geranylgeranyl diphosphate = (2E,6E,10E,14E)-geranylfarnesyl diphosphate + diphosphate. It catalyses the reaction (2E,6E,10E,14E)-geranylfarnesyl diphosphate = astellifadiene + diphosphate. The protein operates within secondary metabolite biosynthesis; terpenoid biosynthesis. Functionally, bifunctional terpene synthase that converts dimethylallyl diphosphate (DMAPP) and isopentenyl diphosphate (IPP) into astellifadiene. The C-terminal prenyltransferase (PT) domain of EvAS catalyzes formation of geranylfarnesyl pyrophosphate (GFPP), whereas the N-terminal terpene cyclase (TC) domain catalyzes the cyclization of GFPP to astellifadiene. The protein is Astellifadiene synthase of Emericella variicolor (Aspergillus stellatus).